The chain runs to 447 residues: Argininosuccinate synthase (447 aa).

ATP-binding positions include 20–28 (AFSGGLDTS) and Ala46. L-citrulline is bound at residue Tyr102. Positions 132 and 134 each coordinate ATP. Positions 134, 138, and 139 each coordinate L-aspartate. Asn138 serves as a coordination point for L-citrulline. Residue Asp139 participates in ATP binding. 2 residues coordinate L-citrulline: Arg142 and Ser195. Residue Asp197 coordinates ATP. L-citrulline-binding residues include Thr204, Glu206, and Glu283.

It belongs to the argininosuccinate synthase family. Type 2 subfamily. As to quaternary structure, homotetramer.

Its subcellular location is the cytoplasm. The catalysed reaction is L-citrulline + L-aspartate + ATP = 2-(N(omega)-L-arginino)succinate + AMP + diphosphate + H(+). It participates in amino-acid biosynthesis; L-arginine biosynthesis; L-arginine from L-ornithine and carbamoyl phosphate: step 2/3. This chain is Argininosuccinate synthase, found in Neisseria gonorrhoeae (strain ATCC 700825 / FA 1090).